The chain runs to 413 residues: uncharacterized protein (413 aa).

Residues 1 to 22 form the signal peptide; that stretch reads MKKSKASALLWLFSLVGFMLHA.

It is found in the periplasm. May be involved in ulvan degradation. Ulvan is the main polysaccharide component of the Ulvales (green seaweed) cell wall. It is composed of disaccharide building blocks comprising 3-sulfated rhamnose (Rha3S) linked to D-glucuronic acid (GlcA), L-iduronic acid (IduA), or D-xylose (Xyl). This is an uncharacterized protein from Formosa agariphila (strain DSM 15362 / KCTC 12365 / LMG 23005 / KMM 3901 / M-2Alg 35-1).